The following is a 525-amino-acid chain: Membrane-bound lytic murein transglycosylase F (525 aa).

Positions 1–24 (MQIRHFNRLKRSVLLFASVLLLSA) are cleaved as a signal peptide. The non-LT domain stretch occupies residues 25–284 (CQIESQPKSE…SLEEKYIGHI (260 aa)). Residues 286–525 (AFDYVDTRAF…VDEDLDQEEE (240 aa)) are LT domain. The active site involves E329. The tract at residues 506-525 (VSGASDITNEVDEDLDQEEE) is disordered. A compositionally biased stretch (acidic residues) spans 514 to 525 (NEVDEDLDQEEE).

The protein in the N-terminal section; belongs to the bacterial solute-binding protein 3 family. It in the C-terminal section; belongs to the transglycosylase Slt family.

It localises to the cell outer membrane. It catalyses the reaction Exolytic cleavage of the (1-&gt;4)-beta-glycosidic linkage between N-acetylmuramic acid (MurNAc) and N-acetylglucosamine (GlcNAc) residues in peptidoglycan, from either the reducing or the non-reducing ends of the peptidoglycan chains, with concomitant formation of a 1,6-anhydrobond in the MurNAc residue.. Its function is as follows. Murein-degrading enzyme that degrades murein glycan strands and insoluble, high-molecular weight murein sacculi, with the concomitant formation of a 1,6-anhydromuramoyl product. Lytic transglycosylases (LTs) play an integral role in the metabolism of the peptidoglycan (PG) sacculus. Their lytic action creates space within the PG sacculus to allow for its expansion as well as for the insertion of various structures such as secretion systems and flagella. The polypeptide is Membrane-bound lytic murein transglycosylase F (Vibrio parahaemolyticus serotype O3:K6 (strain RIMD 2210633)).